The chain runs to 417 residues: Adenylosuccinate synthetase (417 aa).

GTP-binding positions include 11 to 17 and 39 to 41; these read GDEGKGK and GHT. Asp12 serves as the catalytic Proton acceptor. Residues Asp12 and Gly39 each contribute to the Mg(2+) site. IMP contacts are provided by residues 12–15, 37–40, Thr126, Arg140, Gln218, Thr233, and Arg295; these read DEGK and NAGH. His40 serves as the catalytic Proton donor. Position 291–297 (291–297) interacts with substrate; that stretch reads TVSGRIR. GTP contacts are provided by residues Arg297, 323-325, and 406-408; these read KLD and SNG.

This sequence belongs to the adenylosuccinate synthetase family. In terms of assembly, homodimer. Requires Mg(2+) as cofactor.

Its subcellular location is the cytoplasm. It catalyses the reaction IMP + L-aspartate + GTP = N(6)-(1,2-dicarboxyethyl)-AMP + GDP + phosphate + 2 H(+). It functions in the pathway purine metabolism; AMP biosynthesis via de novo pathway; AMP from IMP: step 1/2. Functionally, plays an important role in the de novo pathway of purine nucleotide biosynthesis. Catalyzes the first committed step in the biosynthesis of AMP from IMP. In Neorickettsia sennetsu (strain ATCC VR-367 / Miyayama) (Ehrlichia sennetsu), this protein is Adenylosuccinate synthetase.